Reading from the N-terminus, the 287-residue chain is tRNA-cytidine(32) 2-sulfurtransferase (287 aa).

The PP-loop motif motif lies at 39–44; the sequence is SGGKDS. [4Fe-4S] cluster-binding residues include Cys-114, Cys-117, and Cys-205.

It belongs to the TtcA family. Homodimer. The cofactor is Mg(2+). [4Fe-4S] cluster is required as a cofactor.

It localises to the cytoplasm. The catalysed reaction is cytidine(32) in tRNA + S-sulfanyl-L-cysteinyl-[cysteine desulfurase] + AH2 + ATP = 2-thiocytidine(32) in tRNA + L-cysteinyl-[cysteine desulfurase] + A + AMP + diphosphate + H(+). It participates in tRNA modification. In terms of biological role, catalyzes the ATP-dependent 2-thiolation of cytidine in position 32 of tRNA, to form 2-thiocytidine (s(2)C32). The sulfur atoms are provided by the cysteine/cysteine desulfurase (IscS) system. This is tRNA-cytidine(32) 2-sulfurtransferase from Dechloromonas aromatica (strain RCB).